The sequence spans 387 residues: Sulfoacetaldehyde reductase (387 aa).

The protein belongs to the iron-containing alcohol dehydrogenase family.

The catalysed reaction is 2-hydroxyethane-1-sulfonate + NAD(+) = sulfoacetaldehyde + NADH + H(+). The protein operates within organosulfur degradation; alkanesulfonate degradation. In terms of biological role, involved in an anaerobic respiration pathway that converts the sulfonate taurine (2-aminoethanesulfonate) to ammonia, acetate and sulfide. Catalyzes the NADH-dependent reduction of sulfoacetaldehyde to 2-hydroxyethane-1-sulfonate (isethionate). Does not accept acetaldehyde as a substrate. This is Sulfoacetaldehyde reductase from Bilophila wadsworthia (strain 3_1_6).